Consider the following 280-residue polypeptide: 4-diphosphocytidyl-2-C-methyl-D-erythritol kinase (280 aa).

Residue Lys8 is part of the active site. 91–101 (PVAAGLAGGST) contributes to the ATP binding site. Asp133 is an active-site residue.

Belongs to the GHMP kinase family. IspE subfamily.

It carries out the reaction 4-CDP-2-C-methyl-D-erythritol + ATP = 4-CDP-2-C-methyl-D-erythritol 2-phosphate + ADP + H(+). The protein operates within isoprenoid biosynthesis; isopentenyl diphosphate biosynthesis via DXP pathway; isopentenyl diphosphate from 1-deoxy-D-xylulose 5-phosphate: step 3/6. In terms of biological role, catalyzes the phosphorylation of the position 2 hydroxy group of 4-diphosphocytidyl-2C-methyl-D-erythritol. This is 4-diphosphocytidyl-2-C-methyl-D-erythritol kinase from Clostridium botulinum (strain Loch Maree / Type A3).